A 734-amino-acid polypeptide reads, in one-letter code: Subtilisin-like protease SBT3.2 (734 aa).

An N-terminal signal peptide occupies residues 1–19; it reads MTRALILVAICLMLTLNNA. The propeptide at 20 to 88 is activation peptide; that stretch reads AETKVHIVYL…ESTLRFYELQ (69 aa). The region spanning 92 to 581 is the Peptidase S8 domain; that stretch reads TWDYLQHTSK…GGVVNSEKAA (490 aa). An N-linked (GlcNAc...) asparagine glycan is attached at Asn-108. The Charge relay system role is filled by Asp-122. Asn-143 carries N-linked (GlcNAc...) asparagine glycosylation. His-179 serves as the catalytic Charge relay system. N-linked (GlcNAc...) asparagine glycans are attached at residues Asn-326 and Asn-355. Residues 361 to 438 form the PA domain; that stretch reads VCEDLAKNPA…ELGTDILFYI (78 aa). A glycan (N-linked (GlcNAc...) asparagine) is linked at Asn-497. The Charge relay system role is filled by Ser-512. The N-linked (GlcNAc...) asparagine glycan is linked to Asn-669.

The protein belongs to the peptidase S8 family.

It is found in the secreted. This Arabidopsis thaliana (Mouse-ear cress) protein is Subtilisin-like protease SBT3.2.